The chain runs to 256 residues: Proteasome subunit alpha-type 8 (256 aa).

It belongs to the peptidase T1A family. As to quaternary structure, component of the outer alpha-ring of the 20S proteasome core which is composed of 28 subunits that are arranged in four stacked rings, resulting in a barrel-shaped structure. The catalytic chamber with the active sites is on the inside of the barrel. Interacts with canonical subunits of the spermatoproteasome, including proteasome activators PSME4 (also called PA200) and PSME3 (also called PA28-gamma). Interacts with proteasome-interacting proteins chaperones, ubiquitin ligases and ubiquitin specific proteases. Interacts with meiotic proteins cyclin dependent kinase CDK1 and the ATPase TRIP13 as well as proteins of the synaptonemal complex SIX6OS1 and SYCE3.

Its subcellular location is the nucleus. Functionally, component of the spermatoproteasome, a proteasome specifically found in testis that promotes acetylation-dependent degradation of histones, thereby participating actively to the exchange of histones during spermatogenesis. The proteasome is a protein complex that degrades unneeded or damaged proteins by proteolysis, a chemical reaction that breaks peptide bonds. Required for 20S core proteasome assembly, essential for the degradation of meiotic proteins RAD51 and RPA1 at late prophase I and the progression of meiosis I during spermatogenesis. Localizes to the synaptonemal complex, a 'zipper'-like structure that holds homologous chromosome pairs in synapsis during meiotic prophase I. The protein is Proteasome subunit alpha-type 8 (PSMA8) of Homo sapiens (Human).